Consider the following 170-residue polypeptide: Cytochrome b6-f complex subunit 4 (170 aa).

The next 3 membrane-spanning stretches (helical) occupy residues 46-66, 105-125, and 141-161; these read LLFM…GLAV, LLGI…PFIE, and TVFL…TLPL.

It belongs to the cytochrome b family. PetD subfamily. In terms of assembly, the 4 large subunits of the cytochrome b6-f complex are cytochrome b6, subunit IV (17 kDa polypeptide, PetD), cytochrome f and the Rieske protein, while the 4 small subunits are PetG, PetL, PetM and PetN. The complex functions as a dimer.

The protein localises to the cellular thylakoid membrane. Component of the cytochrome b6-f complex, which mediates electron transfer between photosystem II (PSII) and photosystem I (PSI), cyclic electron flow around PSI, and state transitions. This chain is Cytochrome b6-f complex subunit 4, found in Synechococcus sp. (strain JA-3-3Ab) (Cyanobacteria bacterium Yellowstone A-Prime).